We begin with the raw amino-acid sequence, 180 residues long: Large ribosomal subunit protein uL6 (180 aa).

The protein belongs to the universal ribosomal protein uL6 family. Part of the 50S ribosomal subunit.

Its function is as follows. This protein binds to the 23S rRNA, and is important in its secondary structure. It is located near the subunit interface in the base of the L7/L12 stalk, and near the tRNA binding site of the peptidyltransferase center. This Borreliella afzelii (strain PKo) (Borrelia afzelii) protein is Large ribosomal subunit protein uL6.